The sequence spans 117 residues: Ig kappa chain V region 12F2 (117 aa).

Residues 1–6 form the signal peptide; it reads LPGARC. Residues 7–29 are framework-1; sequence AYDMTQTPASVEVAVGGTVTIKC. Residues C29 and C86 are joined by a disulfide bond. The segment at 30–40 is complementarity-determining-1; the sequence is QASQSISTYLS. Residues 41–55 form a framework-2 region; that stretch reads WYQQKPGQRPKLLIY. The interval 56-62 is complementarity-determining-2; sequence RASTLAS. The interval 63 to 94 is framework-3; that stretch reads GVSSRFKGSGSGTEFTLTISGVECADAATYYC. The interval 95 to 106 is complementarity-determining-3; it reads QQGWSSSNVENV. The tract at residues 107–116 is framework-4; it reads FGGGTEVVVK.

This Oryctolagus cuniculus (Rabbit) protein is Ig kappa chain V region 12F2.